The following is a 399-amino-acid chain: Argininosuccinate synthase (399 aa).

12 to 20 provides a ligand contact to ATP; sequence AFSGGLDTS. An L-citrulline-binding site is contributed by Tyr-90. An ATP-binding site is contributed by Gly-120. L-aspartate contacts are provided by Thr-122, Asn-126, and Asp-127. Residue Asn-126 coordinates L-citrulline. Positions 130, 175, 260, and 272 each coordinate L-citrulline.

It belongs to the argininosuccinate synthase family. Type 1 subfamily. In terms of assembly, homotetramer.

The protein resides in the cytoplasm. The enzyme catalyses L-citrulline + L-aspartate + ATP = 2-(N(omega)-L-arginino)succinate + AMP + diphosphate + H(+). It participates in amino-acid biosynthesis; L-arginine biosynthesis; L-arginine from L-ornithine and carbamoyl phosphate: step 2/3. This chain is Argininosuccinate synthase, found in Methanothermobacter thermautotrophicus (strain ATCC 29096 / DSM 1053 / JCM 10044 / NBRC 100330 / Delta H) (Methanobacterium thermoautotrophicum).